We begin with the raw amino-acid sequence, 565 residues long: Receptor-like serine/threonine-protein kinase NCRK (565 aa).

An N-terminal signal peptide occupies residues 1 to 23 (MKMRVETALAILLVLISIQQCYG). The Extracellular portion of the chain corresponds to 24-103 (GVSNYTCTCF…SKKQYLSRKL (80 aa)). N27, N37, N45, N77, and N85 each carry an N-linked (GlcNAc...) asparagine glycan. The helical transmembrane segment at 104 to 124 (VIVILLFCGVLISLAFLASMI) threads the bilayer. At 125-565 (CYICRKDKFS…PVLLEPSAHI (441 aa)) the chain is on the cytoplasmic side. The Protein kinase domain occupies 210–495 (FSSNSVIGHG…REVVQILSTI (286 aa)). ATP-binding positions include 216 to 224 (IGHGGSSCV) and K238. Residue D339 is the Proton acceptor of the active site. Phosphothreonine is present on residues T378 and T383. Y391 carries the post-translational modification Phosphotyrosine.

This sequence belongs to the protein kinase superfamily. Ser/Thr protein kinase family. As to quaternary structure, interacts with ARAC5. Post-translationally, phosphorylated. As to expression, mostly expressed in leaf primordia, root and shoot apical meristems, lateral root primordia, and stele of older roots and hypocotyls. In leaves and cotyledons, highest levels observed in trichomes, vasculatures, and hydathode endothem.

It localises to the cell membrane. Its subcellular location is the prevacuolar compartment membrane. It is found in the endosome. The enzyme catalyses L-seryl-[protein] + ATP = O-phospho-L-seryl-[protein] + ADP + H(+). The catalysed reaction is L-threonyl-[protein] + ATP = O-phospho-L-threonyl-[protein] + ADP + H(+). The sequence is that of Receptor-like serine/threonine-protein kinase NCRK (NCRK) from Arabidopsis thaliana (Mouse-ear cress).